Reading from the N-terminus, the 356-residue chain is Phospho-N-acetylmuramoyl-pentapeptide-transferase (356 aa).

A run of 10 helical transmembrane segments spans residues 25–45 (TIAA…SIIA), 70–90 (GTPT…AFLW), 93–113 (LSNI…AIGF), 138–158 (FFVA…GFAL), 164–184 (YLIH…VATG), 195–215 (GLAI…AYLC), 235–255 (LAVL…FNAP), 258–278 (AIFM…TVAV), 284–304 (IVLV…VIQV), and 333–353 (QVVI…LSTL).

This sequence belongs to the glycosyltransferase 4 family. MraY subfamily. Mg(2+) is required as a cofactor.

It is found in the cell inner membrane. The enzyme catalyses UDP-N-acetyl-alpha-D-muramoyl-L-alanyl-gamma-D-glutamyl-meso-2,6-diaminopimeloyl-D-alanyl-D-alanine + di-trans,octa-cis-undecaprenyl phosphate = di-trans,octa-cis-undecaprenyl diphospho-N-acetyl-alpha-D-muramoyl-L-alanyl-D-glutamyl-meso-2,6-diaminopimeloyl-D-alanyl-D-alanine + UMP. It functions in the pathway cell wall biogenesis; peptidoglycan biosynthesis. In terms of biological role, catalyzes the initial step of the lipid cycle reactions in the biosynthesis of the cell wall peptidoglycan: transfers peptidoglycan precursor phospho-MurNAc-pentapeptide from UDP-MurNAc-pentapeptide onto the lipid carrier undecaprenyl phosphate, yielding undecaprenyl-pyrophosphoryl-MurNAc-pentapeptide, known as lipid I. This Bartonella tribocorum (strain CIP 105476 / IBS 506) protein is Phospho-N-acetylmuramoyl-pentapeptide-transferase.